Here is a 126-residue protein sequence, read N- to C-terminus: Fluoride-specific ion channel FluC (126 aa).

Helical transmembrane passes span 4–24, 35–55, 71–91, and 104–124; these read FMLL…RYLI, GFPY…GVLM, IIGL…MDNV, and LNIL…FQLM. The Na(+) site is built by Gly78 and Thr81.

The protein belongs to the fluoride channel Fluc/FEX (TC 1.A.43) family.

It is found in the cell inner membrane. The catalysed reaction is fluoride(in) = fluoride(out). Na(+) is not transported, but it plays an essential structural role and its presence is essential for fluoride channel function. In terms of biological role, fluoride-specific ion channel. Important for reducing fluoride concentration in the cell, thus reducing its toxicity. In Aliivibrio salmonicida (strain LFI1238) (Vibrio salmonicida (strain LFI1238)), this protein is Fluoride-specific ion channel FluC.